Consider the following 116-residue polypeptide: Holo-[acyl-carrier-protein] synthase (116 aa).

Positions 8 and 50 each coordinate Mg(2+).

This sequence belongs to the P-Pant transferase superfamily. AcpS family. Mg(2+) is required as a cofactor.

The protein resides in the cytoplasm. It catalyses the reaction apo-[ACP] + CoA = holo-[ACP] + adenosine 3',5'-bisphosphate + H(+). Functionally, transfers the 4'-phosphopantetheine moiety from coenzyme A to a Ser of acyl-carrier-protein. The sequence is that of Holo-[acyl-carrier-protein] synthase from Beutenbergia cavernae (strain ATCC BAA-8 / DSM 12333 / CCUG 43141 / JCM 11478 / NBRC 16432 / NCIMB 13614 / HKI 0122).